A 543-amino-acid chain; its full sequence is Excitatory amino acid transporter 1 (543 aa).

The Cytoplasmic portion of the chain corresponds to 1–47 (MTKSNGEDPRAGSRMERFQQGVRQRTLLAKKKVQNITKDDVKGFLKR). A helical transmembrane segment spans residues 48 to 68 (NGFVLFTVIAVVVGSILGFSV). Topologically, residues 69-86 (RSYHMTFRELKYFSFPGE) are extracellular. The helical transmembrane segment at 87-108 (LLMRMLQMLVLPLIVSSLVTGM) threads the bilayer. Topologically, residues 109–122 (AALDSKASGKMGLR) are cytoplasmic. The helical transmembrane segment at 123 to 145 (AVVYYMTTTVIAVFIGIVIVIIV) threads the bilayer. At 146 to 237 (HPGKGTKEHM…MREEMIPVPG (92 aa)) the chain is on the extracellular side. Asn206 and Asn217 each carry an N-linked (GlcNAc...) asparagine glycan. The helical transmembrane segment at 238–261 (AVNGVNALGLVVFSMCFGLVIGNM) threads the bilayer. Over 262-270 (KEQGKALKD) the chain is Cytoplasmic. A helical membrane pass occupies residues 271 to 298 (FFDSLNEAIMRLVAVIMWYAPIGILFLI). The Extracellular portion of the chain corresponds to 299 to 319 (AGKIAEMEDMGVVGGQLGMYT). The chain crosses the membrane as a helical span at residues 320–341 (VTVIIGLLIHAVIVLPLLYFAV). Residues 342–346 (TRKNP) lie on the Cytoplasmic side of the membrane. Positions 347 to 377 (WVFIGGILQALITALGTSSSSATLPITFKCL) form an intramembrane region, discontinuously helical. 364–366 (SSS) provides a ligand contact to L-aspartate. Over 378-386 (EENNKVDKR) the chain is Cytoplasmic. A helical transmembrane segment spans residues 387 to 413 (VTRFVLPVGATINMDGTALYEALAAIF). Na(+) is bound by residues Gly395, Thr397, and Asn399. Residue Thr403 coordinates L-aspartate. The Extracellular segment spans residues 414 to 426 (IAQVNNYDLNFGQ). The segment at residues 427 to 460 (ILTISITATAASIGAAGIPQAGLVTMVIVLTSVG) is an intramembrane region (discontinuously helical). 444–448 (IPQAG) is a binding site for L-aspartate. At 461–473 (LPTDDITLIIAVD) the chain is on the extracellular side. The chain crosses the membrane as a helical span at residues 474–495 (WFLDRLRTTTNVLGDSLGAGIV). Asp477 and Asn484 together coordinate L-aspartate. The Na(+) site is built by Asn484 and Asp488. Residues 496–543 (EHLSRHELQSGDAEMGNSVIEENEMKKPYQLVSQENELEKPIDSETKM) are Cytoplasmic-facing. The segment at 521 to 543 (KKPYQLVSQENELEKPIDSETKM) is disordered. The segment covering 532 to 543 (ELEKPIDSETKM) has biased composition (basic and acidic residues).

Belongs to the dicarboxylate/amino acid:cation symporter (DAACS) (TC 2.A.23) family. Homotrimer. Detected in retina (at protein level).

Its subcellular location is the cell membrane. It carries out the reaction K(+)(in) + L-glutamate(out) + 3 Na(+)(out) + H(+)(out) = K(+)(out) + L-glutamate(in) + 3 Na(+)(in) + H(+)(in). The enzyme catalyses K(+)(in) + L-aspartate(out) + 3 Na(+)(out) + H(+)(out) = K(+)(out) + L-aspartate(in) + 3 Na(+)(in) + H(+)(in). It catalyses the reaction D-aspartate(out) + K(+)(in) + 3 Na(+)(out) + H(+)(out) = D-aspartate(in) + K(+)(out) + 3 Na(+)(in) + H(+)(in). Functionally, sodium-dependent, high-affinity amino acid transporter that mediates the uptake of L-glutamate and also L-aspartate and D-aspartate. Functions as a symporter that transports one amino acid molecule together with two or three Na(+) ions and one proton, in parallel with the counter-transport of one K(+) ion. Plays a redundant role in the rapid removal of released glutamate from the synaptic cleft, which is essential for terminating the postsynaptic action of glutamate. The polypeptide is Excitatory amino acid transporter 1 (SLC1A3) (Ambystoma tigrinum (Eastern tiger salamander)).